The sequence spans 472 residues: MSVAAKYYPNEPTEPKVVTSEIPGPESKAKVASLGEVFDSRPAYFVADYAKSSGNYIVDVDGNKFLDVYAQISSIALGYNNPALIEAAKSDKMIRALVDRPALGNFPGADLEDILKQLLKFAPKGQNKIWSGLSGADANELAFKAAFMYYRQLQRGGHGIDFSEEENSSVMENTSPGSPQLAVLSFKKAFHGRLFASGSSTCSKPIHKLDFPAFNWPHGEYPVYKYPLSENEEENKKEDDRCLAIVEDLIKSWPTPVAALIIEPIQSEGGDNHASKYFLQSLRDLTSKYNVVYIIDEVQTGVGATGKFWCHEWADIQPPVDLVTFSKKFQSAGYWFHDDRFIPNKAYRQFNTWCGDPARMIIAGAIGQEIVDNNLVDQCARVGDYLFEKLEKLQAKYPTRLINLRGKNRGTFIAFDLETSAERDQLLKLLKSNGCNVGGCAEKSVRLRPSLTFEEKHADIFVDALEKSIGQL.

Residue 135–136 coordinates pyridoxal 5'-phosphate; that stretch reads GA. Residue Arg193 participates in substrate binding. Lys327 is subject to N6-(pyridoxal phosphate)lysine. Residue Thr352 participates in pyridoxal 5'-phosphate binding.

The protein belongs to the class-III pyridoxal-phosphate-dependent aminotransferase family. Homodimer and homotetramer. Pyridoxal 5'-phosphate is required as a cofactor.

It localises to the cytoplasm. It carries out the reaction 4-aminobutanoate + 2-oxoglutarate = succinate semialdehyde + L-glutamate. It functions in the pathway amino-acid degradation; L-arginine degradation. In terms of biological role, required for the degradation of gamma-aminobutyric acid (GABA), which is important for utilization of GABA as nitrogen source and for oxidative stress tolerance. Deaminates GABA to succinate semialdehyde, which in turn is converted to succinate by the succinate-semialdehyde dehydrogenase UGA2. May be involved in an alternative, arginase-independent arginine degradation pathway via GABA. In Kluyveromyces lactis (strain ATCC 8585 / CBS 2359 / DSM 70799 / NBRC 1267 / NRRL Y-1140 / WM37) (Yeast), this protein is 4-aminobutyrate aminotransferase.